Consider the following 609-residue polypeptide: Probable G-protein coupled receptor 153 (609 aa).

Residues 1–11 (MSDERRLPGSA) are Extracellular-facing. A helical membrane pass occupies residues 12–32 (VGWLVCGGLSLLANAWGILSV). The Cytoplasmic portion of the chain corresponds to 33-41 (GAKQKKWKP). Residues 42–62 (LEFLLCTLAATHMLNVAVPIA) traverse the membrane as a helical segment. The Extracellular portion of the chain corresponds to 63-84 (TYSVVQLRRQRPDFEWNEGLCK). The chain crosses the membrane as a helical span at residues 85–105 (VFVSTFYTLTLATCFSVTSLS). Over 106 to 126 (YHRMWMVCWPVNYRLSNAKKQ) the chain is Cytoplasmic. Residues 127-147 (AVHTVMGIWMVSFILSALPAV) form a helical membrane-spanning segment. At 148-175 (GWHDTSERFYTHGCRFIVAEIGLGFGVC) the chain is on the extracellular side. A helical membrane pass occupies residues 176 to 196 (FLLLVGGSVAMGVICTAIALF). At 197-243 (QTLAVQVGRQADRRAFTVPTIVVEDAQGKRRSSIDGSEPAKTSLQTT) the chain is on the cytoplasmic side. A helical membrane pass occupies residues 244 to 264 (GLVTTIVFIYDCLMGFPVLVV). Residues 265-276 (SFSSLRADASAP) lie on the Extracellular side of the membrane. Residues 277-297 (WMALCVLWCSVAQALLLPVFL) traverse the membrane as a helical segment. At 298-609 (WACDRYRADL…LHSDSLGSAS (312 aa)) the chain is on the cytoplasmic side. 2 disordered regions span residues 446–496 (DAPP…SASA) and 514–609 (ALRR…GSAS). 2 stretches are compositionally biased toward low complexity: residues 458–479 (ESLL…RDSP) and 527–536 (AAPDGADPGE). Over residues 571–583 (EPGGLRAAGGGGS) the composition is skewed to gly residues. Positions 584–596 (TSSFLSSPSESSG) are enriched in low complexity.

This sequence belongs to the G-protein coupled receptor 1 family.

It is found in the cell membrane. In terms of biological role, orphan receptor. The chain is Probable G-protein coupled receptor 153 (GPR153) from Homo sapiens (Human).